Here is a 174-residue protein sequence, read N- to C-terminus: Bifunctional protein PyrR (174 aa).

Substrate-binding positions include 38 to 39 (SG), 95 to 103 (DDVLATGRT), and Arg-128. The PRPP-binding motif lies at 91–103 (ILLVDDVLATGRT).

The protein belongs to the purine/pyrimidine phosphoribosyltransferase family. PyrR subfamily.

It carries out the reaction UMP + diphosphate = 5-phospho-alpha-D-ribose 1-diphosphate + uracil. In terms of biological role, regulates the transcription of the pyrimidine nucleotide (pyr) operon in response to exogenous pyrimidines. Functionally, also displays a weak uracil phosphoribosyltransferase activity which is not physiologically significant. This Ralstonia nicotianae (strain ATCC BAA-1114 / GMI1000) (Ralstonia solanacearum) protein is Bifunctional protein PyrR.